Here is a 228-residue protein sequence, read N- to C-terminus: UPF0758 protein H16_A3033 (228 aa).

Positions 102 to 224 constitute an MPN domain; sequence GFDGPAAVRN…IRSLADCCDR (123 aa). Residues His-173, His-175, and Asp-186 each contribute to the Zn(2+) site. The short motif at 173–186 is the JAMM motif element; the sequence is HNHPRGTTAPSQSD.

It belongs to the UPF0758 family.

This Cupriavidus necator (strain ATCC 17699 / DSM 428 / KCTC 22496 / NCIMB 10442 / H16 / Stanier 337) (Ralstonia eutropha) protein is UPF0758 protein H16_A3033.